The chain runs to 1530 residues: Coiled-coil domain-containing protein 141 (1530 aa).

The Spectrin repeat unit spans residues 49–127 (NLLEIGSSQD…SMLERRRELL (79 aa)). T91 bears the Phosphothreonine mark. 3 coiled-coil regions span residues 220–251 (IDSL…VLQL), 758–785 (LKEK…YEEI), and 865–967 (AKSL…VNKK). 4 disordered regions span residues 1153–1240 (SEER…PASS), 1259–1285 (LGKA…DTFT), 1324–1356 (PREV…SNVT), and 1369–1403 (SPGL…SVVS). Positions 1334–1345 (PSSQAQEISLGT) are enriched in polar residues. One can recognise an Ig-like domain in the interval 1409 to 1497 (PHFSRLLSNV…GTLSSKAILH (89 aa)).

As to quaternary structure, interacts with DISC1. Interacts preferentially with phosphorylated forms of myosin regulatory light chain (MRLC). Interacts (via the N-terminal region) with HDAC6; inhibits the deacetylase activity of HDAC6. Interacts with KIBRA (via the C-terminal region); retains AMPAR in the cytosol after internalization. Post-translationally, ubiquitinated and degradated by the CDC20-APC/C pathway. During brain development, CDC20-APC/C complex degrades CCDC141 after centrosome translocation into the dilated area. CCDC141 is restabilized in the dilation until the centrosome enters the dilation, at which point it is once again immediately destabilized by CDC20-APC/C complex. The oscillatory regulation of CCDC141 protein is needed for proper cortical migration. Phosphorylation at Thr-91 by PLK1 affects CCDC141 degradation.

It is found in the cytoplasm. The protein resides in the cytoskeleton. The protein localises to the microtubule organizing center. It localises to the centrosome. Its function is as follows. Plays a critical role in cortical radial and GnRH neurons migration during brain development. Regulates cortical radial migration by negatively controlling the activity of histone deacetylase 6 (HDAC6) and promotes centrosome maturation. CAMDI is required for dilation formation of cortical neurons during radial migration. Plays a critical role in learning and memory performance through regulation of AMPA-selective glutamate receptors (AMPARs) cell surface expression in competition with KIBRA. This is Coiled-coil domain-containing protein 141 from Rattus norvegicus (Rat).